The sequence spans 322 residues: MYTCSIIIYILTFWQLSKIKKQVAAAEKQVMTVTEKQEAVAEFYDKSTDAWEVFFGEHLHDGFYEPGTTATIPGSKVAVVRMIDELLRFAGISDDPEKKPKTMLDVGCGLGGTCLHVAKKYDIKCTGITISPEQVKCAQDLAATQGLESKVSFDVGDALDMPYKDGTFDLVFTIQCIEHIQDKEKFIREMVRVAAPGAPVVIAGYAARNLSPSEESLKPEEKMVLEKICDHIVLSWLCSTGDYVKWLTPLPVQDIKVWDLTQNITPFYPLCIKEAFTWKSFTSLLKMGGWSAIKVVFAVKMMAMAAEEGLLKFAAVTCRKSK.

The interval 103-112 is SAM motif I; sequence MLDVGCGLGG. Residues 166-174 form an SAM motif II region; the sequence is GTFDLVFTI. The interval 193-202 is SAM motif III; that stretch reads VAAPGAPVVI.

This sequence belongs to the class I-like SAM-binding methyltransferase superfamily. gTMT family. Homodimer. Accumulates in tissues actively synthesizing monoterpenoid indole alkaloids (MIAs) (at protein level). Mainly expressed in young leaves, but barely in roots and stems.

The protein resides in the cytoplasm. Its subcellular location is the cytosol. It carries out the reaction picrinine + S-adenosyl-L-methionine = ervincine + S-adenosyl-L-homocysteine + H(+). The protein operates within alkaloid biosynthesis; vindoline biosynthesis. In terms of biological role, S-adenosyl-L-methionine-dependent N-methyltransferase involved in the biosynthesis of biologically active monoterpenoid indole alkaloids (MIAs) natural products including vindoline. Catalyzes the conversion of picrinine to N-methylpicrinine (ervincine). Also accepts, with low efficiency, 21-hydroxycyclolochnericine and norajmaline as substrates. This chain is Picrinine-N-methytransferase, found in Vinca minor (Common periwinkle).